A 677-amino-acid polypeptide reads, in one-letter code: Probable serine/threonine-protein kinase mkcF (677 aa).

The SH3 domain occupies 1–58; the sequence is MLYLVATGDYKGPSENHLSFTKGQRIEFLERTENGFIKGKLDGKVGIFPSSLITIETR. The segment at 72 to 244 is disordered; it reads TETKDDTGSI…SSSSSSTKRR (173 aa). A compositionally biased stretch (low complexity) spans 79–94; it reads GSISSSTSTSTSSLTT. A compositionally biased stretch (polar residues) spans 105 to 126; it reads GEQQPSTSTINGQSSSTSPILQ. A compositionally biased stretch (low complexity) spans 127–146; it reads SNGTTNTTTSSTSNNNIGDN. Over residues 158 to 174 the composition is skewed to polar residues; it reads TTSNHSKSASRLSVASF. A compositionally biased stretch (low complexity) spans 175–192; sequence STTTTATTTTTTTTTATS. The span at 209 to 224 shows a compositional bias: basic and acidic residues; it reads DKKSKDDDKSEKEGLY. Low complexity predominate over residues 230-240; the sequence is SSSSSSSSSSS. The 246-residue stretch at 401 to 646 folds into the Protein kinase domain; the sequence is IKFTHMVGRG…VDKLMRHPFF (246 aa). ATP is bound by residues 407–415 and Lys-428; that span reads VGRGQYGKV. Asp-519 functions as the Proton acceptor in the catalytic mechanism.

It belongs to the protein kinase superfamily. Ser/Thr protein kinase family. STE20 subfamily. The cofactor is Mg(2+).

It carries out the reaction L-seryl-[protein] + ATP = O-phospho-L-seryl-[protein] + ADP + H(+). It catalyses the reaction L-threonyl-[protein] + ATP = O-phospho-L-threonyl-[protein] + ADP + H(+). This Dictyostelium discoideum (Social amoeba) protein is Probable serine/threonine-protein kinase mkcF.